Reading from the N-terminus, the 228-residue chain is uncharacterized protein (228 aa).

4 helical membrane-spanning segments follow: residues 37–54, 67–89, 104–126, and 138–160; these read WCMH…TLIV, VVSI…STGV, HIGI…TSRL, and VLHV…LVLY.

It is found in the cell membrane. This is an uncharacterized protein from Treponema pallidum (strain Nichols).